Here is a 246-residue protein sequence, read N- to C-terminus: Ubiquinone biosynthesis O-methyltransferase (246 aa).

S-adenosyl-L-methionine contacts are provided by Arg44, Gly63, Asp84, and Met128.

This sequence belongs to the methyltransferase superfamily. UbiG/COQ3 family.

The catalysed reaction is a 3-demethylubiquinol + S-adenosyl-L-methionine = a ubiquinol + S-adenosyl-L-homocysteine + H(+). The enzyme catalyses a 3-(all-trans-polyprenyl)benzene-1,2-diol + S-adenosyl-L-methionine = a 2-methoxy-6-(all-trans-polyprenyl)phenol + S-adenosyl-L-homocysteine + H(+). The protein operates within cofactor biosynthesis; ubiquinone biosynthesis. In terms of biological role, O-methyltransferase that catalyzes the 2 O-methylation steps in the ubiquinone biosynthetic pathway. This Xylella fastidiosa (strain Temecula1 / ATCC 700964) protein is Ubiquinone biosynthesis O-methyltransferase.